The sequence spans 248 residues: Myelin protein P0 (248 aa).

Residues Met1–Gln28 form the signal peptide. Residues Ala29–Gly155 lie on the Extracellular side of the membrane. Positions Ile30–Thr143 constitute an Ig-like V-type domain. The cysteines at positions 50 and 127 are disulfide-linked. An N-linked (GlcNAc...) (complex) asparagine glycan is attached at Asn122. The helical transmembrane segment at Val156 to Phe176 threads the bilayer. Residues Tyr177–Lys248 lie on the Cytoplasmic side of the membrane. Ser210 is modified (phosphoserine; by PKC). The tract at residues Asp224 to Lys248 is disordered. 2 positions are modified to phosphoserine: Ser226 and Ser228. Residues Ser233 and Ser243 each carry the phosphoserine; by PKC modification.

It belongs to the myelin P0 protein family. In terms of assembly, homodimer and homotetramer. In terms of processing, N-glycosylated; contains sulfate-substituted glycan. As to expression, found only in peripheral nervous system Schwann cells.

The protein localises to the cell membrane. Is an adhesion molecule necessary for normal myelination in the peripheral nervous system. It mediates adhesion between adjacent myelin wraps and ultimately drives myelin compaction. The polypeptide is Myelin protein P0 (MPZ) (Bos taurus (Bovine)).